A 281-amino-acid polypeptide reads, in one-letter code: Pantothenate synthetase (281 aa).

ATP is bound at residue 30–37 (MGALHRGH). The active-site Proton donor is histidine 37. Glutamine 61 lines the (R)-pantoate pocket. A beta-alanine-binding site is contributed by glutamine 61. Position 147-150 (147-150 (GEKD)) interacts with ATP. Position 153 (glutamine 153) interacts with (R)-pantoate. ATP is bound by residues isoleucine 176 and 184-187 (LSSR).

The protein belongs to the pantothenate synthetase family. As to quaternary structure, homodimer.

Its subcellular location is the cytoplasm. It carries out the reaction (R)-pantoate + beta-alanine + ATP = (R)-pantothenate + AMP + diphosphate + H(+). It functions in the pathway cofactor biosynthesis; (R)-pantothenate biosynthesis; (R)-pantothenate from (R)-pantoate and beta-alanine: step 1/1. Functionally, catalyzes the condensation of pantoate with beta-alanine in an ATP-dependent reaction via a pantoyl-adenylate intermediate. The chain is Pantothenate synthetase from Porphyromonas gingivalis (strain ATCC BAA-308 / W83).